A 309-amino-acid polypeptide reads, in one-letter code: HPr kinase/phosphorylase (309 aa).

Catalysis depends on residues H138 and K159. ATP is bound at residue 153 to 160; the sequence is GASGIGKS. A Mg(2+)-binding site is contributed by S160. Catalysis depends on D177, which acts as the Proton acceptor; for phosphorylation activity. Proton donor; for dephosphorylation activity. An important for the catalytic mechanism of both phosphorylation and dephosphorylation region spans residues 201-210; that stretch reads IEIRGVGIID. E202 serves as a coordination point for Mg(2+). R243 is a catalytic residue. Positions 264 to 269 are important for the catalytic mechanism of dephosphorylation; that stretch reads PVKTGR.

It belongs to the HPrK/P family. As to quaternary structure, homohexamer. Requires Mg(2+) as cofactor.

The catalysed reaction is [HPr protein]-L-serine + ATP = [HPr protein]-O-phospho-L-serine + ADP + H(+). The enzyme catalyses [HPr protein]-O-phospho-L-serine + phosphate + H(+) = [HPr protein]-L-serine + diphosphate. Catalyzes the ATP- as well as the pyrophosphate-dependent phosphorylation of a specific serine residue in HPr, a phosphocarrier protein of the phosphoenolpyruvate-dependent sugar phosphotransferase system (PTS). HprK/P also catalyzes the pyrophosphate-producing, inorganic phosphate-dependent dephosphorylation (phosphorolysis) of seryl-phosphorylated HPr (P-Ser-HPr). The two antagonistic activities of HprK/P are regulated by several intracellular metabolites, which change their concentration in response to the absence or presence of rapidly metabolisable carbon sources (glucose, fructose, etc.) in the growth medium. Therefore, by controlling the phosphorylation state of HPr, HPrK/P is a sensor enzyme that plays a major role in the regulation of carbon metabolism and sugar transport: it mediates carbon catabolite repression (CCR), and regulates PTS-catalyzed carbohydrate uptake and inducer exclusion. This chain is HPr kinase/phosphorylase, found in Lactococcus lactis subsp. lactis (strain IL1403) (Streptococcus lactis).